An 88-amino-acid polypeptide reads, in one-letter code: Stannin (88 aa).

Residues 1 to 10 (MSIMDHSPTT) are Mitochondrial intermembrane-facing. The helical transmembrane segment at 11-31 (GVVTVIVILIAIAALGALILG) threads the bilayer. Over 32 to 88 (CWCYLRLQRISQSEDEESIVGDGETKEPFLLVQYSAKGPCVERKAKLMTPNGPEVHG) the chain is Cytoplasmic. Ser49 is subject to Phosphoserine.

It belongs to the stannin family. Monomer.

Its subcellular location is the mitochondrion outer membrane. Functionally, plays a role in the toxic effects of organotins. Plays a role in endosomal maturation. This Homo sapiens (Human) protein is Stannin (SNN).